Consider the following 50-residue polypeptide: Large ribosomal subunit protein bL33 (50 aa).

The protein belongs to the bacterial ribosomal protein bL33 family.

This chain is Large ribosomal subunit protein bL33, found in Mycoplasmopsis synoviae (strain 53) (Mycoplasma synoviae).